Consider the following 368-residue polypeptide: tRNA/tmRNA (uracil-C(5))-methyltransferase (368 aa).

S-adenosyl-L-methionine is bound by residues Gln-190, Tyr-218, Asn-223, Glu-239, and Asp-301. Cys-326 (nucleophile) is an active-site residue. Residue Glu-360 is the Proton acceptor of the active site.

It belongs to the class I-like SAM-binding methyltransferase superfamily. RNA M5U methyltransferase family. TrmA subfamily.

The enzyme catalyses uridine(54) in tRNA + S-adenosyl-L-methionine = 5-methyluridine(54) in tRNA + S-adenosyl-L-homocysteine + H(+). It carries out the reaction uridine(341) in tmRNA + S-adenosyl-L-methionine = 5-methyluridine(341) in tmRNA + S-adenosyl-L-homocysteine + H(+). Functionally, dual-specificity methyltransferase that catalyzes the formation of 5-methyluridine at position 54 (m5U54) in all tRNAs, and that of position 341 (m5U341) in tmRNA (transfer-mRNA). The polypeptide is tRNA/tmRNA (uracil-C(5))-methyltransferase (Photobacterium profundum (strain SS9)).